The sequence spans 497 residues: Mechanosensitive ion channel protein 1, mitochondrial (497 aa).

The transit peptide at 1 to 86 directs the protein to the mitochondrion; sequence MAGVRLSLLK…RAFSSKSDDF (86 aa). 5 consecutive transmembrane segments (helical) span residues 152-172, 216-236, 238-258, 280-300, and 305-325; these read DVIV…VVMP, LVTF…TIAA, YFSP…LYRW, VLTL…MASA, and VAVQ…AFAA.

It belongs to the MscS (TC 1.A.23) family.

The protein resides in the mitochondrion membrane. In terms of biological role, mechanosensitive channel that opens in response to stretch forces in the membrane lipid bilayer. This Arabidopsis thaliana (Mouse-ear cress) protein is Mechanosensitive ion channel protein 1, mitochondrial (MSL1).